The chain runs to 141 residues: Hemoglobin subunit alpha-D (141 aa).

The 141-residue stretch at 1-141 (MLTEDEKQLI…VSAVLAEKYR (141 aa)) folds into the Globin domain. His-58 and His-87 together coordinate heme b.

The protein belongs to the globin family. Heterotetramer of two alpha-D chains and two beta chains. Red blood cells.

In terms of biological role, involved in oxygen transport from the lung to the various peripheral tissues. This Chelonoidis carbonarius (Red-footed tortoise) protein is Hemoglobin subunit alpha-D (HBAD).